A 139-amino-acid polypeptide reads, in one-letter code: Lysozyme (139 aa).

Positions 1–19 (MTKYVILLAVLAFALHCDA) are cleaved as a signal peptide. The region spanning 20–139 (KRFTRCGLVQ…QHGLPDISDC (120 aa)) is the C-type lysozyme domain. 4 disulfides stabilise this stretch: Cys25–Cys139, Cys46–Cys129, Cys81–Cys95, and Cys91–Cys109. Catalysis depends on residues Glu51 and Asp69.

This sequence belongs to the glycosyl hydrolase 22 family.

The enzyme catalyses Hydrolysis of (1-&gt;4)-beta-linkages between N-acetylmuramic acid and N-acetyl-D-glucosamine residues in a peptidoglycan and between N-acetyl-D-glucosamine residues in chitodextrins.. In terms of biological role, lysozymes have primarily a bacteriolytic function; those in tissues and body fluids are associated with the monocyte-macrophage system and enhance the activity of immunoagents. This is Lysozyme from Hyalophora cecropia (Cecropia moth).